The primary structure comprises 578 residues: E3 ubiquitin-protein ligase Praja-1 (578 aa).

The interval 1–298 is disordered; the sequence is MSHQERIASQ…KVPRRRRTMA (298 aa). Basic and acidic residues-rich tracts occupy residues 57 to 67 and 107 to 116; these read DYSRYPPREYR and KFKDDPEKGA. Residues 151 to 163 are compositionally biased toward polar residues; it reads SKQNGSSASQISS. Position 231 is a phosphothreonine (Thr-231). Basic and acidic residues-rich tracts occupy residues 243–264 and 273–290; these read RWRD…RGRG and RYAE…ADKV. A phosphoserine mark is found at Ser-317 and Ser-319. Positions 332–397 are disordered; that stretch reads RSREQPQSSS…QASLEEGEIP (66 aa). The segment covering 359–373 has biased composition (low complexity); that stretch reads AGAGSLASAGSNGSG. A compositionally biased stretch (acidic residues) spans 377 to 395; the sequence is EVQDPSLQEEEQASLEEGE. The RING-type zinc finger occupies 530–571; sequence CPICCSEYVKGEVATELPCHHYFHKPCVSIWLQKSGTCPVCR.

In terms of assembly, binds ubiquitin-conjugating enzymes (E2s). Binds, in vitro and in vivo, the MAGE conserved domain of MAGED1. Binds weakly Necdin, in vitro. Interacts with UBE2D2. In terms of processing, substrate for E2-dependent ubiquitination. Expressed in brain, liver, kidney. Highest levels in brain where it is found in many regions including cortical and subcortical areas and in neurons of the amygdala. Weak expression also found in testis. Also expressed in developing embryo.

It carries out the reaction S-ubiquitinyl-[E2 ubiquitin-conjugating enzyme]-L-cysteine + [acceptor protein]-L-lysine = [E2 ubiquitin-conjugating enzyme]-L-cysteine + N(6)-ubiquitinyl-[acceptor protein]-L-lysine.. Functionally, has E2-dependent E3 ubiquitin-protein ligase activity. Ubiquitinates MAGED1 antigen leading to its subsequent degradation by proteasome. May be involved in protein sorting. The chain is E3 ubiquitin-protein ligase Praja-1 (Pja1) from Mus musculus (Mouse).